The following is a 130-amino-acid chain: Trypsin inhibitor (130 aa).

The interval 27–49 (LHKQARQSGSGPSPQGPQQRPPL) is disordered. Residues 32–49 (RQSGSGPSPQGPQQRPPL) are compositionally biased toward low complexity.

It belongs to the 2S seed storage albumins family. As to quaternary structure, the protein consists of two chains linked by disulfide bonds.

In terms of biological role, inhibits trypsin with a Ki of 7 x 10(-6) M. This Mutarda arvensis (Charlock mustard) protein is Trypsin inhibitor.